Here is a 341-residue protein sequence, read N- to C-terminus: Dihydroorotate dehydrogenase (quinone) (341 aa).

Residues A61–K65 and T85 each bind FMN. Substrate is bound at residue K65. N110–F114 serves as a coordination point for substrate. 2 residues coordinate FMN: N138 and N171. N171 serves as a coordination point for substrate. The active-site Nucleophile is S174. N176 contributes to the substrate binding site. Residues K216 and T244 each coordinate FMN. N245–T246 serves as a coordination point for substrate. FMN-binding positions include G267, G296, and Y317 to S318.

This sequence belongs to the dihydroorotate dehydrogenase family. Type 2 subfamily. Monomer. The cofactor is FMN.

It localises to the cell membrane. It catalyses the reaction (S)-dihydroorotate + a quinone = orotate + a quinol. Its pathway is pyrimidine metabolism; UMP biosynthesis via de novo pathway; orotate from (S)-dihydroorotate (quinone route): step 1/1. In terms of biological role, catalyzes the conversion of dihydroorotate to orotate with quinone as electron acceptor. The protein is Dihydroorotate dehydrogenase (quinone) of Pseudomonas putida (strain GB-1).